The chain runs to 346 residues: Cytochrome c551 peroxidase (346 aa).

Positions 1–23 (MQSSQLLPLGSLLLSFATPLAQA) are cleaved as a signal peptide. Residues Cys-74, Cys-77, His-78, Cys-220, Cys-223, His-224, His-284, and Met-298 each coordinate heme c.

Requires heme c as cofactor. In terms of processing, binds 2 heme groups per subunit. Sequencing of the whole protein indicates about 20% starts on Val-247.

The protein resides in the periplasm. It catalyses the reaction 2 Fe(II)-[cytochrome c] + H2O2 + 2 H(+) = 2 Fe(III)-[cytochrome c] + 2 H2O. Functionally, catalyzes the peroxidative oxidation of azurin and cytochrome c551. Likely to provide protection against toxic peroxides. This is Cytochrome c551 peroxidase (ccpA) from Pseudomonas aeruginosa (strain ATCC 15692 / DSM 22644 / CIP 104116 / JCM 14847 / LMG 12228 / 1C / PRS 101 / PAO1).